We begin with the raw amino-acid sequence, 409 residues long: tRNA-specific 2-thiouridylase MnmA (409 aa).

Residues 43 to 50 and leucine 69 each bind ATP; that span reads AMSGGVDS. Cysteine 137 acts as the Nucleophile in catalysis. A disulfide bridge links cysteine 137 with cysteine 235. An ATP-binding site is contributed by glycine 161. The interaction with tRNA stretch occupies residues 185–187; it reads KDQ. Cysteine 235 functions as the Cysteine persulfide intermediate in the catalytic mechanism.

It belongs to the MnmA/TRMU family.

The protein resides in the cytoplasm. The catalysed reaction is S-sulfanyl-L-cysteinyl-[protein] + uridine(34) in tRNA + AH2 + ATP = 2-thiouridine(34) in tRNA + L-cysteinyl-[protein] + A + AMP + diphosphate + H(+). Catalyzes the 2-thiolation of uridine at the wobble position (U34) of tRNA, leading to the formation of s(2)U34. This chain is tRNA-specific 2-thiouridylase MnmA, found in Caulobacter sp. (strain K31).